We begin with the raw amino-acid sequence, 397 residues long: Probable tRNA sulfurtransferase (397 aa).

A THUMP domain is found at 60–165 (HPVIEKLQEV…KEGTYITAYD (106 aa)). ATP is bound by residues 183-184 (ML), 208-209 (HF), R265, G287, and Q296.

The protein belongs to the ThiI family.

It localises to the cytoplasm. It carries out the reaction [ThiI sulfur-carrier protein]-S-sulfanyl-L-cysteine + a uridine in tRNA + 2 reduced [2Fe-2S]-[ferredoxin] + ATP + H(+) = [ThiI sulfur-carrier protein]-L-cysteine + a 4-thiouridine in tRNA + 2 oxidized [2Fe-2S]-[ferredoxin] + AMP + diphosphate. It catalyses the reaction [ThiS sulfur-carrier protein]-C-terminal Gly-Gly-AMP + S-sulfanyl-L-cysteinyl-[cysteine desulfurase] + AH2 = [ThiS sulfur-carrier protein]-C-terminal-Gly-aminoethanethioate + L-cysteinyl-[cysteine desulfurase] + A + AMP + 2 H(+). It participates in cofactor biosynthesis; thiamine diphosphate biosynthesis. Catalyzes the ATP-dependent transfer of a sulfur to tRNA to produce 4-thiouridine in position 8 of tRNAs, which functions as a near-UV photosensor. Also catalyzes the transfer of sulfur to the sulfur carrier protein ThiS, forming ThiS-thiocarboxylate. This is a step in the synthesis of thiazole, in the thiamine biosynthesis pathway. The sulfur is donated as persulfide by IscS. The sequence is that of Probable tRNA sulfurtransferase from Anoxybacillus flavithermus (strain DSM 21510 / WK1).